The sequence spans 204 residues: ATP phosphoribosyltransferase (204 aa).

This sequence belongs to the ATP phosphoribosyltransferase family. Short subfamily.

Its subcellular location is the cytoplasm. The catalysed reaction is 1-(5-phospho-beta-D-ribosyl)-ATP + diphosphate = 5-phospho-alpha-D-ribose 1-diphosphate + ATP. It participates in amino-acid biosynthesis; L-histidine biosynthesis; L-histidine from 5-phospho-alpha-D-ribose 1-diphosphate: step 1/9. Its function is as follows. Catalyzes the condensation of ATP and 5-phosphoribose 1-diphosphate to form N'-(5'-phosphoribosyl)-ATP (PR-ATP). Has a crucial role in the pathway because the rate of histidine biosynthesis seems to be controlled primarily by regulation of HisG enzymatic activity. This Pyrococcus furiosus (strain ATCC 43587 / DSM 3638 / JCM 8422 / Vc1) protein is ATP phosphoribosyltransferase (hisG).